The chain runs to 508 residues: Putative adenosylhomocysteinase 3 (508 aa).

Phosphoserine is present on serine 4. A disordered region spans residues 24–81 (DQKQEFNKRPTKIGRRSLSRSISQSSTDSYSSAASYTDSSDDETSPRDKQQKNSKGSS). Positions 32–41 (RPTKIGRRSL) are enriched in basic residues. Over residues 42–61 (SRSISQSSTDSYSSAASYTD) the composition is skewed to low complexity. Serine 46, serine 49, serine 52, and serine 55 each carry phosphoserine. Threonine 133, aspartate 207, and glutamate 232 together coordinate substrate. 233 to 235 (SVT) serves as a coordination point for NAD(+). 2 residues coordinate substrate: lysine 262 and aspartate 266. NAD(+)-binding positions include asparagine 267, 298–303 (GEVGKG), glutamate 319, asparagine 354, 375–377 (IGH), and asparagine 422.

Belongs to the adenosylhomocysteinase family. In terms of assembly, homotetramer. Forms heteromultimers with AHCYL1 (via the C-terminal region). Interacts with ITPR1; with lower affinity than AHCYL1 and maybe via ITPR1. Interacts with SLC4A4. Interacts with ZCCHC4. NAD(+) is required as a cofactor.

The protein resides in the cytoplasm. The protein localises to the microsome. It carries out the reaction S-adenosyl-L-homocysteine + H2O = L-homocysteine + adenosine. It participates in amino-acid biosynthesis; L-homocysteine biosynthesis; L-homocysteine from S-adenosyl-L-homocysteine: step 1/1. Functionally, may regulate the electrogenic sodium/bicarbonate cotransporter SLC4A4 activity and Mg(2+)-sensitivity. On the contrary of its homolog AHCYL1, does not regulate ITPR1 sensitivity to inositol 1,4,5-trisphosphate. This chain is Putative adenosylhomocysteinase 3 (AHCYL2), found in Pongo abelii (Sumatran orangutan).